Consider the following 38-residue polypeptide: Large ribosomal subunit protein bL36A (38 aa).

It belongs to the bacterial ribosomal protein bL36 family.

The polypeptide is Large ribosomal subunit protein bL36A (Cronobacter sakazakii (strain ATCC BAA-894) (Enterobacter sakazakii)).